Consider the following 619-residue polypeptide: MESQLTRPYGHEQAEEPIRIHHPEEEEHHEKGASKVLKKVKEKAKKIKNSLTKHGNGHDHDVEDDDDEYDEQDPEVHGAPVYESSAVRGGVTGKPKSLSHAGETNVPASEEIVPPGTKVFPVVSSDHTKPIEPVSLQDTSYGHEALADPVRTTETSDWEAKREAPTHYPLGVSEFSDRGESREAHQEPLNTPVSLLSATEDVTRTFAPGGEDDYLGGQRKVNVETPKRLEEDPAAPGGGSDYLSGVSNYQSKVTDPTHKGGEAGVPEIAESLGRMKVTDESPDQKSRQGREEDFPTRSHEFDLKKESDINKNSPARFGGESKAGMEEDFPTRGDVKVESGLGRDLPTGTHDQFSPELSRPKERDDSEETKDESTHETKPSTYTEQLASATSAITNKAIAAKNVVASKLGYTGENGGGQSESPVKDETPRSVTAYGQKVAGTVAEKLTPVYEKVKETGSTVMTKLPLSGGGSGVKETQQGEEKGVTAKNYISEKLKPGEEDKALSEMIAEKLHFGGGGEKKTTATKEVEVTVEKIPSDQIAEGKGHGEAVAEEGKGGEGMVGKVKGAVTSWLGGKPKSPRSVEESPQSLGTTVGTMGFSDSGGSELGGSGGGKGVQDSGN.

Disordered stretches follow at residues 1–383 (MESQ…STYT) and 408–429 (LGYTGENGGGQSESPVKDETPR). Positions 9-33 (YGHEQAEEPIRIHHPEEEEHHEKGA) are enriched in basic and acidic residues. Residues 36 to 48 (VLKKVKEKAKKIK) show a composition bias toward basic residues. The segment covering 62 to 73 (VEDDDDEYDEQD) has biased composition (acidic residues). Over residues 175-186 (FSDRGESREAHQ) the composition is skewed to basic and acidic residues. Residues 188-197 (PLNTPVSLLS) are compositionally biased toward polar residues. Positions 221-231 (VNVETPKRLEE) are enriched in basic and acidic residues. The segment covering 245–254 (GVSNYQSKVT) has biased composition (polar residues). Basic and acidic residues-rich tracts occupy residues 276-309 (KVTDESPDQKSRQGREEDFPTRSHEFDLKKESDI) and 323-337 (AGMEEDFPTRGDVKV). Repeat copies occupy residues 404–408 (VASKL), 442–446 (VAEKL), 460–464 (VMTKL), 490–494 (ISEKL), and 507–511 (IAEKL). A 5 X 5 AA repeats of [IV]-[AMS]-[EST]-K-L region spans residues 404 to 511 (VASKLGYTGE…ALSEMIAEKL (108 aa)). Positions 461 to 485 (MTKLPLSGGGSGVKETQQGEEKGVT) are disordered. Ser-536 is subject to Phosphoserine. Basic and acidic residues predominate over residues 537–555 (DQIAEGKGHGEAVAEEGKG). The segment at 537–619 (DQIAEGKGHG…GGKGVQDSGN (83 aa)) is disordered. The segment covering 583–593 (ESPQSLGTTVG) has biased composition (polar residues). Over residues 603 to 613 (SELGGSGGGKG) the composition is skewed to gly residues.

The protein belongs to the LTI78/LTI65 family.

The chain is Low-temperature-induced 65 kDa protein (LTI65) from Arabidopsis thaliana (Mouse-ear cress).